The sequence spans 427 residues: Beta-porphyranase D (427 aa).

Residues 1–19 (MILKQAILTLVLVNANLFA) form the signal peptide. The segment at 23–45 (PKTYSSTDKETRQGPPKPPMGKR) is disordered. One can recognise a GH16 domain in the interval 32–308 (ETRQGPPKPP…WVRAYRLVDV (277 aa)). Residues W73, R76, E168, E173, and E272 each coordinate substrate. Residue E168 is the Nucleophile of the active site. The active-site Proton donor is E173.

It belongs to the glycosyl hydrolase 16 family.

The protein resides in the periplasm. The catalysed reaction is Hydrolysis of beta-D-galactopyranose-(1-&gt;4)-alpha-L-galactopyranose-6-sulfate linkages in porphyran.. In terms of biological role, cleaves the sulfated polysaccharide porphyran at the (1-&gt;4) linkages between beta-D-galactopyranose and alpha-L-galactopyranose-6-sulfate, forming mostly the disaccharide alpha-L-galactopyranose-6-sulfate-(1-&gt;3)-beta-D-galactose. The protein is Beta-porphyranase D (porD) of Zobellia galactanivorans (strain DSM 12802 / CCUG 47099 / CIP 106680 / NCIMB 13871 / Dsij).